The following is a 493-amino-acid chain: Probable cytosol aminopeptidase (493 aa).

Mn(2+) is bound by residues Lys-265 and Asp-270. Lys-277 is an active-site residue. Positions 288, 347, and 349 each coordinate Mn(2+). Arg-351 is an active-site residue.

Belongs to the peptidase M17 family. It depends on Mn(2+) as a cofactor.

Its subcellular location is the cytoplasm. It catalyses the reaction Release of an N-terminal amino acid, Xaa-|-Yaa-, in which Xaa is preferably Leu, but may be other amino acids including Pro although not Arg or Lys, and Yaa may be Pro. Amino acid amides and methyl esters are also readily hydrolyzed, but rates on arylamides are exceedingly low.. The enzyme catalyses Release of an N-terminal amino acid, preferentially leucine, but not glutamic or aspartic acids.. Presumably involved in the processing and regular turnover of intracellular proteins. Catalyzes the removal of unsubstituted N-terminal amino acids from various peptides. This Hydrogenovibrio crunogenus (strain DSM 25203 / XCL-2) (Thiomicrospira crunogena) protein is Probable cytosol aminopeptidase.